The sequence spans 244 residues: 1-(5-phosphoribosyl)-5-[(5-phosphoribosylamino)methylideneamino] imidazole-4-carboxamide isomerase (244 aa).

The active-site Proton acceptor is Asp-8. Asp-129 functions as the Proton donor in the catalytic mechanism.

It belongs to the HisA/HisF family.

Its subcellular location is the cytoplasm. It catalyses the reaction 1-(5-phospho-beta-D-ribosyl)-5-[(5-phospho-beta-D-ribosylamino)methylideneamino]imidazole-4-carboxamide = 5-[(5-phospho-1-deoxy-D-ribulos-1-ylimino)methylamino]-1-(5-phospho-beta-D-ribosyl)imidazole-4-carboxamide. It participates in amino-acid biosynthesis; L-histidine biosynthesis; L-histidine from 5-phospho-alpha-D-ribose 1-diphosphate: step 4/9. This Allorhizobium ampelinum (strain ATCC BAA-846 / DSM 112012 / S4) (Agrobacterium vitis (strain S4)) protein is 1-(5-phosphoribosyl)-5-[(5-phosphoribosylamino)methylideneamino] imidazole-4-carboxamide isomerase.